A 330-amino-acid polypeptide reads, in one-letter code: Probable cytosolic iron-sulfur protein assembly protein 1 (330 aa).

7 WD repeats span residues leucine 12–isoleucine 49, alanine 56–phenylalanine 95, glycine 105–glutamate 144, glutamate 151–valine 190, glycine 195–glutamine 236, valine 248–phenylalanine 286, and cysteine 292–alanine 330.

It belongs to the WD repeat CIA1 family. In terms of assembly, interacts with NAR1.

The protein localises to the cytoplasm. The protein resides in the nucleus. Essential component of the cytosolic iron-sulfur (Fe/S) protein assembly machinery. Required for the maturation of extramitochondrial Fe/S proteins. This chain is Probable cytosolic iron-sulfur protein assembly protein 1, found in Saccharomyces cerevisiae (strain YJM789) (Baker's yeast).